Consider the following 140-residue polypeptide: Large ribosomal subunit protein uL11 (140 aa).

It belongs to the universal ribosomal protein uL11 family. In terms of assembly, part of the ribosomal stalk of the 50S ribosomal subunit. Interacts with L10 and the large rRNA to form the base of the stalk. L10 forms an elongated spine to which L12 dimers bind in a sequential fashion forming a multimeric L10(L12)X complex. Post-translationally, one or more lysine residues are methylated.

Its function is as follows. Forms part of the ribosomal stalk which helps the ribosome interact with GTP-bound translation factors. The chain is Large ribosomal subunit protein uL11 from Halothermothrix orenii (strain H 168 / OCM 544 / DSM 9562).